The sequence spans 324 residues: Zinc transporter ZIP1 (324 aa).

The Extracellular portion of the chain corresponds to 1–30; the sequence is MGPWGEPELLVWRPEAAASEAPVPMGLEVK. The helical transmembrane segment at 31–51 threads the bilayer; that stretch reads LGALVLLLVLTLICSLVPVCV. Residues 52-68 are Cytoplasmic-facing; that stretch reads LRRPGANPEASASRQKA. A helical transmembrane segment spans residues 69–89; sequence LSLVSCFAGGVFLATCLLDLL. Residues 90-104 are Extracellular-facing; it reads PDYLGAIDEALAALH. A helical membrane pass occupies residues 105–125; the sequence is VTLQFPLQEFILAMGFFLVLV. At 126–179 the chain is on the cytoplasmic side; sequence MEQITLAYKEQSGPPPREETRALLGTVNGGPQHWHDGLGVPQAGGASSAPSALR. The chain crosses the membrane as a helical span at residues 180–200; sequence ACVLVFSLALHSVFEGLAVGL. Residues 201–206 lie on the Extracellular side of the membrane; that stretch reads QRDQAR. A helical transmembrane segment spans residues 207-227; the sequence is AMELCLALLLHKGILAVSLSL. The Cytoplasmic portion of the chain corresponds to 228–237; sequence RLLQSHLRAQ. A helical transmembrane segment spans residues 238 to 258; that stretch reads VVAGCGILFSCMTPLGIGLGT. Topologically, residues 259–272 are extracellular; it reads ALAESAGPLHQLAQ. A helical transmembrane segment spans residues 273-293; it reads SVLEGMAAGTFLYITFLEILP. Residues 294 to 303 are Cytoplasmic-facing; the sequence is QELATSEQRI. A helical membrane pass occupies residues 304–324; that stretch reads LKVILLLAGFALLTGLLFIQI.

Belongs to the ZIP transporter (TC 2.A.5) family.

The protein resides in the cell membrane. Its subcellular location is the endoplasmic reticulum membrane. The enzyme catalyses Zn(2+)(in) = Zn(2+)(out). In terms of biological role, transporter for the divalent cation Zn(2+). Mediates the influx of Zn(2+) into cells from extracellular space. The polypeptide is Zinc transporter ZIP1 (SLC39A1) (Bos taurus (Bovine)).